A 471-amino-acid polypeptide reads, in one-letter code: Putative ABC transporter ATP-binding protein STK_11360 (471 aa).

ABC transporter domains lie at 4–241 and 255–470; these read LEIK…LEPL and VILE…VIKD. Residues 37–44 and 286–293 contribute to the ATP site; these read GKSGSGKS and GDNGSGKS.

Belongs to the ABC transporter superfamily.

The protein resides in the cell membrane. Probably part of an ABC transporter complex. Responsible for energy coupling to the transport system. The polypeptide is Putative ABC transporter ATP-binding protein STK_11360 (Sulfurisphaera tokodaii (strain DSM 16993 / JCM 10545 / NBRC 100140 / 7) (Sulfolobus tokodaii)).